Consider the following 262-residue polypeptide: Dihydroorotate dehydrogenase B (NAD(+)), electron transfer subunit (262 aa).

One can recognise an FAD-binding FR-type domain in the interval 3 to 104 (QLQEMMTVVS…MGPLGNGFPV (102 aa)). FAD is bound by residues 53–56 (RPIS), 70–72 (LYR), and 79–80 (GT). Residues Cys226, Cys231, Cys234, and Cys249 each coordinate [2Fe-2S] cluster.

It belongs to the PyrK family. Heterotetramer of 2 PyrK and 2 PyrD type B subunits. It depends on [2Fe-2S] cluster as a cofactor. FAD is required as a cofactor.

It participates in pyrimidine metabolism; UMP biosynthesis via de novo pathway; orotate from (S)-dihydroorotate (NAD(+) route): step 1/1. In terms of biological role, responsible for channeling the electrons from the oxidation of dihydroorotate from the FMN redox center in the PyrD type B subunit to the ultimate electron acceptor NAD(+). This is Dihydroorotate dehydrogenase B (NAD(+)), electron transfer subunit from Lactococcus lactis subsp. cremoris (strain SK11).